A 79-amino-acid polypeptide reads, in one-letter code: Scutellin-5 (79 aa).

The N-terminal stretch at 1–24 is a signal peptide; it reads MSSGGLLLLLGLLTLWEVLTPVSS. One can recognise a BPTI/Kunitz inhibitor domain in the interval 31-79; the sequence is YELPADIGPCEDFTGAFHYSPREHEYIEFIYGGCEGNANNFNTLEECET. An intrachain disulfide couples Cys40 to Cys64.

Its subcellular location is the secreted. Its function is as follows. Serine protease inhibitor. This Oxyuranus scutellatus scutellatus (Australian taipan) protein is Scutellin-5.